The primary structure comprises 635 residues: MAGUK p55 subfamily member 4 (635 aa).

The span at 1–16 shows a compositional bias: basic and acidic residues; that stretch reads MRQSDRGAELTNEDRA. Residues 1–23 are disordered; it reads MRQSDRGAELTNEDRALPTPPDP. L27 domains are found at residues 23–79 and 86–136; these read PENG…EKKL and AQIL…FEPL. One can recognise a PDZ domain in the interval 153 to 234; that stretch reads IVCLVKNQQP…TIMFKVIPVS (82 aa). The region spanning 241 to 311 is the SH3 domain; the sequence is QKMVYVRAMI…PSNHLLKRKQ (71 aa). The 190-residue stretch at 426 to 615 folds into the Guanylate kinase-like domain; sequence HRLIVLVGPS…ACGQLLSAIQ (190 aa). Positions 567 to 622 form a coiled coil; that stretch reads VDMKFKDEDLQEMEELAQKMESQFGQFFDHVIVNDNLQDACGQLLSAIQKAQEELQ.

This sequence belongs to the MAGUK family. May interact with GRIA2. Interacts with MPDZ. Forms a complex with CRB1 and PALS1. Interacts with FASLG. As to expression, detected in the retina (at protein level). Highly enriched in the retina where it is mainly expressed by rod photoreceptors; detected in the inner segment of the photoreceptor layer and in the outer nuclear layer. Also detected at much lower levels in pineal gland, cerebellum, cortex, hippocampus, olfactory bulb, heart, liver and spleen. Expressed in the CA1-CA3 regions of pyramidal cell layers and in the granule cell layer of dentate gyrus in the hippocampus. In the cerebellum, expressed in Purkinje cells and throughout the granule cell layer. In the olfactory bulb, expressed in mitral cells.

It localises to the cytoplasm. Functionally, may play a role in retinal photoreceptors development. The polypeptide is MAGUK p55 subfamily member 4 (Mpp4) (Mus musculus (Mouse)).